Reading from the N-terminus, the 354-residue chain is MGSGISSESKESAKRSKELEKKLQEDAERDARTVKLLLLGAGESGKSTIVKQMKIIHKNGYSKQECMEFKAVVYSNTLQSILAIVKAMTTLGIDYVNPRSREDQQLLLSMANTLEDGDMTPQLAEIIKRLWGDPGIQACFERASEYQLNDSAAYYLNDLDRLTAPGYVPNEQDVLHSRVKTTGIIETQFSFKDLNFRMFDVGGQRSERKKWIHCFEGVTCIIFCAALSAYDMVLVEDEEVNRMHESLHLFNSICNHKYFATTSIVLFLNKKDLFQEKVTKVHLSICFPEYTGPNTFEDAGNYIKNQFLDLNLKKEDKEIYSHMTCATDTQNVKFVFDAVTDIIIKENLKDCGLF.

Positions 1–27 (MGSGISSESKESAKRSKELEKKLQEDA) are disordered. A lipid anchor (N-myristoyl glycine) is attached at Gly-2. Residues 8 to 27 (ESKESAKRSKELEKKLQEDA) show a composition bias toward basic and acidic residues. Residues 32–354 (RTVKLLLLGA…KENLKDCGLF (323 aa)) form the G-alpha domain. Residues 35–48 (KLLLLGAGESGKST) are G1 motif. Residues 40–47 (GAGESGKS), 175–181 (LHSRVKT), 200–204 (DVGGQ), 269–272 (NKKD), and Ala-326 contribute to the GTP site. Positions 47 and 181 each coordinate Mg(2+). Positions 173-181 (DVLHSRVKT) are G2 motif. Residues 196–205 (FRMFDVGGQR) are G3 motif. Residues 265 to 272 (VLFLNKKD) are G4 motif. The G5 motif stretch occupies residues 324 to 329 (TCATDT).

The protein belongs to the G-alpha family. G(i/o/t/z) subfamily. As to quaternary structure, g proteins are composed of 3 units; alpha, beta and gamma, respectively GNAT3, GNB1 and GNG13 for Gustducin heterotrimer for bitter taste transduction. The alpha chain contains the guanine nucleotide binding site. Component of the TAS2R14-GNAT3 complex, consisting of TAS2R14, GNAT3, GNB1 and GNG2; within the complex interacts with TAS2R14; this complex plays a role in the perception of bitterness. Gustducin heterotrimer may also be composed of GNAT3, GNB3 and GNG13. Post-translationally, potential N-myristoylation may anchor alpha-subunit to the inner surface of plasma membrane. In terms of tissue distribution, expressed in taste buds (sensory organs of clustered epithelial cells) of the circumvallate, foliate and fungiform papillae of the tongue, as well as in nasoincisor, palatal and epiglottal taste buds at protein level. Expressed in enteroendocrine of the gut, in the lumenal pole of a subset of brush cells lining the stomach and the intestine at protein level. Detected in solitary cells throughout the respiratory track. Expressed also in spermatozoa.

The protein localises to the cytoplasm. Its function is as follows. Guanine nucleotide-binding protein (G protein) alpha subunit playing a prominent role in bitter and sweet taste transduction as well as in umami (monosodium glutamate, monopotassium glutamate, and inosine monophosphate) taste transduction. Transduction by this alpha subunit involves coupling of specific cell-surface receptors with a cGMP-phosphodiesterase; Activation of phosphodiesterase lowers intracellular levels of cAMP and cGMP which may open a cyclic nucleotide-suppressible cation channel leading to influx of calcium, ultimately leading to release of neurotransmitter. Indeed, denatonium and strychnine induce transient reduction in cAMP and cGMP in taste tissue, whereas this decrease is inhibited by GNAT3 antibody. Gustducin heterotrimer transduces response to bitter and sweet compounds via regulation of phosphodiesterase for alpha subunit, as well as via activation of phospholipase C for beta and gamma subunits, with ultimate increase inositol trisphosphate and increase of intracellular Calcium. GNAT3 can functionally couple to taste receptors to transmit intracellular signal: receptor heterodimer TAS1R2/TAS1R3 senses sweetness and TAS1R1/TAS1R3 transduces umami taste, whereas the T2R family GPCRs act as bitter sensors. Also functions as lumenal sugar sensors in the gut to control the expression of the Na+-glucose transporter SGLT1 in response to dietaty sugar, as well as the secretion of Glucagon-like peptide-1, GLP-1 and glucose-dependent insulinotropic polypeptide, GIP. Thus, may modulate the gut capacity to absorb sugars, with implications for the prevention and treatment of malabsorption syndromes and diet-related disorders including diabetes and obesity. The protein is Guanine nucleotide-binding protein G(t) subunit alpha-3 (Gnat3) of Rattus norvegicus (Rat).